The primary structure comprises 135 residues: Holo-[acyl-carrier-protein] synthase (135 aa).

Mg(2+) contacts are provided by D7 and E57.

It belongs to the P-Pant transferase superfamily. AcpS family. The cofactor is Mg(2+).

Its subcellular location is the cytoplasm. The catalysed reaction is apo-[ACP] + CoA = holo-[ACP] + adenosine 3',5'-bisphosphate + H(+). Transfers the 4'-phosphopantetheine moiety from coenzyme A to a Ser of acyl-carrier-protein. This Corynebacterium glutamicum (strain ATCC 13032 / DSM 20300 / JCM 1318 / BCRC 11384 / CCUG 27702 / LMG 3730 / NBRC 12168 / NCIMB 10025 / NRRL B-2784 / 534) protein is Holo-[acyl-carrier-protein] synthase.